The primary structure comprises 77 residues: Pi/alpha-stichotoxin-Hmg5b (77 aa).

Residues 1–21 (MDYQRLLFLFAVAMVITTTVA) form the signal peptide. A propeptide spanning residues 22 to 34 (LPKDTALMDGQLQ) is cleaved from the precursor. 3 cysteine pairs are disulfide-bonded: Cys-40/Cys-73, Cys-42/Cys-66, and Cys-56/Cys-74. Met-52 is modified (methionine sulfoxide; partial).

This sequence belongs to the sea anemone type 3 (BDS) potassium channel toxin family. Toxin occurs in two forms in the mucus, Hmg 1b-2 which is not oxidized and Hmg 1b-2 MetOx which is oxidized at Met-52.

It localises to the secreted. The protein resides in the nematocyst. Its function is as follows. The non-oxidized toxin is remarkably non-selective with activity on many different ion channels. Weakly and reversibly inhibits rat and human homomeric ASIC1 (isoform ASIC1a) (IC(50)=4.8 uM, and IC(50)=14.6 uM), and ASIC3 (IC(50)=15.9 uM). Molecular modeling interaction with ASIC1a suggests that this peptide hinders the collapse of acidic pockets and stabilizes nonconducting channels state. It activates several potassium channels including Kv1.1/KCNA1, Kv1.2/KCNA2, and drosophila Shaker IR. It moderately to potently inhibits potassium channels including Kv1.3/KCNA3, Kv1.4/KCNA4, Kv1.5/KCNA5, Kv1.6/KCNA6, Kv2.1/KCNB1, Kv4.2/KCND2, Kv7.1/KCNQ1, Kv7.2/Kv7.3 (KCNQ2/KCNQ3), Kv7.4/KCNQ4, hERG/KCNH2, and C.elegans QKT1. On sodium channels, it moderately to potently inhibits Nav1.1/SCN1A, Nav1.2/SCN2A, Nav1.3/SCN3A, Nav1.4/SCN4A, Nav1.5/SCN5A, Nav1.6/SCN8A, Nav1.7/SCN9A, Nav1.8/SCN10A, and B.germanica BgNav. It also moderately to potently inhibits Cav3.1/CACNA1G, Cav3.2/CACNA1H, and Cav3.3/CACNA1I. Significant shifts in the voltage-current relationship are observed on Kv and Nav, depending on the channel isoform, whereas the toxin does not seem to modulate the voltage-sensor domains of Cav channels, acting mainly as a pore blocker. Does not activate nicotinic acetylcholine receptors (nAChR), but potentiates ACh-elicited current of human alpha-7/CHRNA7 nAChR. Is also able to bind T.californica muscle-type nAChRs. In vivo, causes an excitatory effect in mice behavior. Also shows antihyperalgesic and analgesic activity in the acid-induced muscle pain mice model, and weak anti-inflammatory effect in models of acute local inflammation. In terms of biological role, forms an oxidized toxin derivative (Hmg 1b-2 MetOx). Able to bind T.californica muscle-type nAChRs (alpha-1-beta-1-delta-epsilon (CHRNA1-CHRNB1-CHRND-CHRNE)). The sequence is that of Pi/alpha-stichotoxin-Hmg5b from Heteractis magnifica (Magnificent sea anemone).